The chain runs to 159 residues: Ribosomal RNA large subunit methyltransferase H (159 aa).

An S-adenosyl-L-methionine-binding site is contributed by glycine 108.

Belongs to the RNA methyltransferase RlmH family. Homodimer.

It is found in the cytoplasm. The enzyme catalyses pseudouridine(1915) in 23S rRNA + S-adenosyl-L-methionine = N(3)-methylpseudouridine(1915) in 23S rRNA + S-adenosyl-L-homocysteine + H(+). Functionally, specifically methylates the pseudouridine at position 1915 (m3Psi1915) in 23S rRNA. This chain is Ribosomal RNA large subunit methyltransferase H, found in Lactobacillus johnsonii (strain CNCM I-12250 / La1 / NCC 533).